The primary structure comprises 520 residues: Probable glycine dehydrogenase (decarboxylating) subunit 2 (520 aa).

The segment at 1–29 is disordered; it reads MWRQSRWNEPLITEMSRRGRRGALPPRPD. At Lys279 the chain carries N6-(pyridoxal phosphate)lysine.

This sequence belongs to the GcvP family. C-terminal subunit subfamily. As to quaternary structure, the glycine cleavage system is composed of four proteins: P, T, L and H. In this organism, the P 'protein' is a heterodimer of two subunits. It depends on pyridoxal 5'-phosphate as a cofactor.

It catalyses the reaction N(6)-[(R)-lipoyl]-L-lysyl-[glycine-cleavage complex H protein] + glycine + H(+) = N(6)-[(R)-S(8)-aminomethyldihydrolipoyl]-L-lysyl-[glycine-cleavage complex H protein] + CO2. The glycine cleavage system catalyzes the degradation of glycine. The P protein binds the alpha-amino group of glycine through its pyridoxal phosphate cofactor; CO(2) is released and the remaining methylamine moiety is then transferred to the lipoamide cofactor of the H protein. The sequence is that of Probable glycine dehydrogenase (decarboxylating) subunit 2 from Aeropyrum pernix (strain ATCC 700893 / DSM 11879 / JCM 9820 / NBRC 100138 / K1).